A 290-amino-acid chain; its full sequence is Phosphate import ATP-binding protein PstB (290 aa).

Residues 43–285 (MSVRNLNVYY…PEHELTEAYI (243 aa)) enclose the ABC transporter domain. 75 to 82 (GPSGCGKS) provides a ligand contact to ATP.

The protein belongs to the ABC transporter superfamily. Phosphate importer (TC 3.A.1.7) family. In terms of assembly, the complex is composed of two ATP-binding proteins (PstB), two transmembrane proteins (PstC and PstA) and a solute-binding protein (PstS).

It is found in the cell inner membrane. It carries out the reaction phosphate(out) + ATP + H2O = ADP + 2 phosphate(in) + H(+). Functionally, part of the ABC transporter complex PstSACB involved in phosphate import. Responsible for energy coupling to the transport system. In Pseudoalteromonas atlantica (strain T6c / ATCC BAA-1087), this protein is Phosphate import ATP-binding protein PstB.